The primary structure comprises 326 residues: N-acetyl-gamma-glutamyl-phosphate reductase (326 aa).

Cys-155 is an active-site residue.

The protein belongs to the NAGSA dehydrogenase family. Type 1 subfamily.

Its subcellular location is the cytoplasm. The enzyme catalyses N-acetyl-L-glutamate 5-semialdehyde + phosphate + NADP(+) = N-acetyl-L-glutamyl 5-phosphate + NADPH + H(+). The protein operates within amino-acid biosynthesis; L-arginine biosynthesis; N(2)-acetyl-L-ornithine from L-glutamate: step 3/4. Its function is as follows. Catalyzes the NADPH-dependent reduction of N-acetyl-5-glutamyl phosphate to yield N-acetyl-L-glutamate 5-semialdehyde. In Shewanella sp. (strain MR-4), this protein is N-acetyl-gamma-glutamyl-phosphate reductase.